Here is a 269-residue protein sequence, read N- to C-terminus: Expansin-B1 (269 aa).

Positions 1–24 are cleaved as a signal peptide; the sequence is MGSLANNIMVVGAVLAALVAGGSC. A glycan (N-linked (GlcNAc...) asparagine) is linked at asparagine 34. Residues 63 to 169 form the Expansin-like EG45 domain; it reads GGACGIKNVN…RRVRCKYPAG (107 aa). Disulfide bonds link cysteine 66–cysteine 94, cysteine 97–cysteine 164, and cysteine 102–cysteine 108. In terms of domain architecture, Expansin-like CBD spans 183–264; sequence NYLAVLVKYV…NWRPDAVYTS (82 aa).

This sequence belongs to the expansin family. Expansin B subfamily. In terms of tissue distribution, expressed in anthers and pollen.

It is found in the secreted. It localises to the cell wall. Its subcellular location is the membrane. May aid fertilization by loosening the cell wall of the stigma and style, thereby facilitating penetration of the pollen tube. Acts selectively on grass cell walls, which are relatively poor in pectins and xyloglucans and rich in glucuronoarabinoxylans and (1-3),(1-4)-beta-D-glucans, when compared with cell walls of other angiosperms, including other monocots. The chain is Expansin-B1 (EXPB1) from Zea mays (Maize).